A 273-amino-acid chain; its full sequence is Nitrogenase iron protein (273 aa).

8–15 (GKGGIGKS) is a binding site for ATP. Cys95 contacts [4Fe-4S] cluster. The residue at position 98 (Arg98) is an ADP-ribosylarginine; by dinitrogenase reductase ADP-ribosyltransferase. Cys130 is a [4Fe-4S] cluster binding site.

Belongs to the NifH/BchL/ChlL family. Homodimer. [4Fe-4S] cluster is required as a cofactor. The reversible ADP-ribosylation of Arg-98 inactivates the nitrogenase reductase and regulates nitrogenase activity.

It carries out the reaction N2 + 8 reduced [2Fe-2S]-[ferredoxin] + 16 ATP + 16 H2O = H2 + 8 oxidized [2Fe-2S]-[ferredoxin] + 2 NH4(+) + 16 ADP + 16 phosphate + 6 H(+). In terms of biological role, the key enzymatic reactions in nitrogen fixation are catalyzed by the nitrogenase complex, which has 2 components: the iron protein and the molybdenum-iron protein. The chain is Nitrogenase iron protein from Methanosarcina mazei (strain ATCC BAA-159 / DSM 3647 / Goe1 / Go1 / JCM 11833 / OCM 88) (Methanosarcina frisia).